Here is a 486-residue protein sequence, read N- to C-terminus: Aspartyl/glutamyl-tRNA(Asn/Gln) amidotransferase subunit B (486 aa).

It belongs to the GatB/GatE family. GatB subfamily. Heterotrimer of A, B and C subunits.

It carries out the reaction L-glutamyl-tRNA(Gln) + L-glutamine + ATP + H2O = L-glutaminyl-tRNA(Gln) + L-glutamate + ADP + phosphate + H(+). The catalysed reaction is L-aspartyl-tRNA(Asn) + L-glutamine + ATP + H2O = L-asparaginyl-tRNA(Asn) + L-glutamate + ADP + phosphate + 2 H(+). Its function is as follows. Allows the formation of correctly charged Asn-tRNA(Asn) or Gln-tRNA(Gln) through the transamidation of misacylated Asp-tRNA(Asn) or Glu-tRNA(Gln) in organisms which lack either or both of asparaginyl-tRNA or glutaminyl-tRNA synthetases. The reaction takes place in the presence of glutamine and ATP through an activated phospho-Asp-tRNA(Asn) or phospho-Glu-tRNA(Gln). The polypeptide is Aspartyl/glutamyl-tRNA(Asn/Gln) amidotransferase subunit B (Janthinobacterium sp. (strain Marseille) (Minibacterium massiliensis)).